A 384-amino-acid polypeptide reads, in one-letter code: uncharacterized protein (384 aa).

Positions 1 to 116 are disordered; it reads MTEMPKKKFS…FPAAPPPMDS (116 aa). 2 stretches are compositionally biased toward basic and acidic residues: residues 14–70 and 78–95; these read ARGD…RAGD and RFKDKDRDKPRYGDDRPR. Residues G318, I338, and L347 each contribute to the S-adenosyl-L-methionine site.

It belongs to the class IV-like SAM-binding methyltransferase superfamily. RNA methyltransferase TrmH family.

This is an uncharacterized protein from Synechocystis sp. (strain ATCC 27184 / PCC 6803 / Kazusa).